The chain runs to 460 residues: Putative 2,3-dihydroxypropane-1-sulfonate exporter (460 aa).

Residues 1–18 lie on the Cytoplasmic side of the membrane; that stretch reads MSQTSSNPATLRLPFKEK. The chain crosses the membrane as a helical span at residues 19 to 39; it reads LAYGLGDLGSNILLDIGTLYL. Residues 40–46 are Periplasmic-facing; that stretch reads LKFYTDV. The chain crosses the membrane as a helical span at residues 47 to 67; the sequence is LGLPGTYGGIIFLIAKFFTAF. Topologically, residues 68–91 are cytoplasmic; that stretch reads TDMGTGIMLDSRRKIGPKGKFRPF. The chain crosses the membrane as a helical span at residues 92–112; it reads VLYAAFPVTLLAIANFVGTPF. The Periplasmic portion of the chain corresponds to 113 to 122; that stretch reads EVTGKTVVAT. A helical transmembrane segment spans residues 123-143; the sequence is MLFMLYGLVFSMMNCSYGAMV. The Cytoplasmic portion of the chain corresponds to 144–161; sequence PAITKNPDERASLAAWRQ. The helical transmembrane segment at 162-182 threads the bilayer; it reads GGATLGLLLCTVGFVPVMNLI. The Periplasmic segment spans residues 183–190; it reads EGNAQLSY. The helical transmembrane segment at 191 to 211 threads the bilayer; the sequence is IFAATLFSLFGLLFMWLCYAG. Topologically, residues 212–242 are cytoplasmic; it reads VKERYVEVKPVDSAQKPGLLQSFRAIAGNRP. Residues 243–263 traverse the membrane as a helical segment; that stretch reads LFILCIANLCTLGAFNVKLAI. At 264–275 the chain is on the periplasmic side; the sequence is QVYYTQYVLNDP. Residues 276-296 traverse the membrane as a helical segment; the sequence is ILLSWMGFFSMGCIFIGVFLM. Residues 297-307 are Cytoplasmic-facing; that stretch reads PGAVRRFGKKK. Residues 308-328 traverse the membrane as a helical segment; the sequence is VYIGGLLIWVAGDLLNYFFGG. A topological domain (periplasmic) is located at residue Gly-329. The chain crosses the membrane as a helical span at residues 330–350; sequence SVSFVAFSCLAFFGSAFVNSL. Topologically, residues 351 to 386 are cytoplasmic; sequence NWALVSDTVEYGEWRTGVRSEGTVYTGFTFFRKVSQ. A helical membrane pass occupies residues 387–407; that stretch reads ALAGFFPGWMLTQIGYIPNVV. Topologically, residues 408–418 are periplasmic; it reads QSAGTVEGLRQ. The chain crosses the membrane as a helical span at residues 419-439; the sequence is LIFIYPCVLAVITIIAMGCFY. At 440–460 the chain is on the cytoplasmic side; sequence NLNEKMYVRIVEEIEARKHTV.

The protein belongs to the sodium:galactoside symporter (TC 2.A.2) family.

The protein resides in the cell inner membrane. Its function is as follows. Could be involved in the export of 2,3-dihydroxypropane-1-sulfonate (DHPS). The sequence is that of Putative 2,3-dihydroxypropane-1-sulfonate exporter (yihP) from Salmonella typhimurium (strain LT2 / SGSC1412 / ATCC 700720).